A 449-amino-acid polypeptide reads, in one-letter code: MAELISKEGNKVSFRVAVPAAEVNRAYDQVWAGLARDVRVPGFRPGKAPRKVLESRVGKGYVENEVRDRLLQVHYPQAARELKLSLVDARIEPEPLVSGQPFSFTVRGETYPEVTLGDWRAVQLTATAPEITDEVLNRTLSDLQERNATFQTVERPIEATDQVTIEELGEEGGSYPVYLDVAEPHVRDALIGKNVGDEVEITVPAHQHGDHEHPEHTVRVRVQSVQTKQLQPLDDEFARSLNFESLDRLRTDLRAELERRARQEGDAARREEFVNQLVEGMQVEIPQALIDRRREAMLEEIQDDLGRQGVKWSEYENFMREQGKLDEFLSDLAKNAESRVKRDLALEKLAEDLGVQLSDAEFSNTMNALAQANGLTPQQLQRQLGPNGINAYYISLTREKALQQALATLNGQQVAGRQEAGAEQTAQAAEQESGQPQAEGEQAAEQRGE.

One can recognise a PPIase FKBP-type domain in the interval T160–Q231. The segment at G411–E449 is disordered. Positions A415–A443 are enriched in low complexity.

It belongs to the FKBP-type PPIase family. Tig subfamily.

It is found in the cytoplasm. The enzyme catalyses [protein]-peptidylproline (omega=180) = [protein]-peptidylproline (omega=0). In terms of biological role, involved in protein export. Acts as a chaperone by maintaining the newly synthesized protein in an open conformation. Functions as a peptidyl-prolyl cis-trans isomerase. The polypeptide is Trigger factor (Deinococcus geothermalis (strain DSM 11300 / CIP 105573 / AG-3a)).